A 343-amino-acid chain; its full sequence is Flavone 3'-O-methyltransferase OMT2 (343 aa).

Asn107 serves as a coordination point for (E)-ferulate. Residues Gly184, Asp207, Asp227, Met228, Met240, and Lys241 each coordinate S-adenosyl-L-homocysteine. The active-site Proton acceptor is His245. Position 246 (Asp246) interacts with (E)-5-hydroxyferulate. Active-site residues include Glu273 and Glu305.

Belongs to the class I-like SAM-binding methyltransferase superfamily. Cation-independent O-methyltransferase family. COMT subfamily. As to quaternary structure, homodimer.

It catalyses the reaction (E)-5-hydroxyferulate + S-adenosyl-L-methionine = (E)-sinapate + S-adenosyl-L-homocysteine + H(+). It carries out the reaction luteolin + S-adenosyl-L-methionine = chrysoeriol + S-adenosyl-L-homocysteine + H(+). The catalysed reaction is quercetin + S-adenosyl-L-methionine = isorhamnetin + S-adenosyl-L-homocysteine + H(+). The enzyme catalyses (E)-caffeate + S-adenosyl-L-methionine = (E)-ferulate + S-adenosyl-L-homocysteine + H(+). It catalyses the reaction a 3'-hydroxyflavone + S-adenosyl-L-methionine = a 3'-methoxyflavone + S-adenosyl-L-homocysteine + H(+). It participates in flavonoid metabolism. In terms of biological role, catalyzes the 3'-O-methylation of the flavonoids luteolin and quercetin. Catalyzes the 3- of 5-O-methylation of the phenylpropanoids caffeate and 5-hydroxyferulate. Substrate preference is 5-hydroxyferulate &gt; luteolin &gt; quercetin &gt; caffeate. Apigenin, kempferol and 3,4-dimethylquercetin do not seem to be substrates for methylation. This Chrysosplenium americanum (American golden saxifrage) protein is Flavone 3'-O-methyltransferase OMT2.